The chain runs to 702 residues: Acetylcholinesterase (702 aa).

An N-terminal signal peptide occupies residues 1–36; sequence MEIRGLITRLLGPCHLRHLILCSLGLYSILVQSVHC. Residues 107–134 form a disordered region; the sequence is HIHSTTTRRRGLTRRESSSDATDSDPLV. Asn-187 is a glycosylation site (N-linked (GlcNAc...) asparagine). Cys-195 and Cys-222 form a disulfide bridge. Ser-327 acts as the Acyl-ester intermediate in catalysis. Cys-381 and Cys-394 are disulfide-bonded. Active-site charge relay system residues include Glu-453 and His-567. An intrachain disulfide couples Cys-529 to Cys-650. Asn-637 carries an N-linked (GlcNAc...) asparagine glycan.

The protein belongs to the type-B carboxylesterase/lipase family.

The protein resides in the synapse. It is found in the secreted. Its subcellular location is the cell membrane. The catalysed reaction is acetylcholine + H2O = choline + acetate + H(+). In terms of biological role, rapidly hydrolyzes choline released into the synapse. The chain is Acetylcholinesterase (ACHE1) from Culex pipiens (House mosquito).